Consider the following 292-residue polypeptide: NAD kinase (292 aa).

Asp73 (proton acceptor) is an active-site residue. Residues 73–74 (DG), 147–148 (NE), His158, Arg175, Asp177, 188–193 (TAYSLS), and Gln247 contribute to the NAD(+) site.

The protein belongs to the NAD kinase family. It depends on a divalent metal cation as a cofactor.

The protein resides in the cytoplasm. The enzyme catalyses NAD(+) + ATP = ADP + NADP(+) + H(+). Involved in the regulation of the intracellular balance of NAD and NADP, and is a key enzyme in the biosynthesis of NADP. Catalyzes specifically the phosphorylation on 2'-hydroxyl of the adenosine moiety of NAD to yield NADP. The protein is NAD kinase of Shigella dysenteriae serotype 1 (strain Sd197).